A 281-amino-acid polypeptide reads, in one-letter code: Bifunctional N-acyl-homoserine lactone acylase/prephenate dehydratase (281 aa).

The region spanning isoleucine 6–arginine 181 is the Prephenate dehydratase domain. An ACT domain is found at threonine 196 to proline 273. The L-phenylalanine site is built by alanine 207, leucine 208, asparagine 221, and methionine 222.

As to quaternary structure, homodimer.

The enzyme catalyses an N-acyl-L-homoserine lactone + H2O = L-homoserine lactone + a carboxylate. It catalyses the reaction prephenate + H(+) = 3-phenylpyruvate + CO2 + H2O. Its pathway is amino-acid biosynthesis; L-phenylalanine biosynthesis; phenylpyruvate from prephenate: step 1/1. Its function is as follows. Multifunctional enzyme that acts on N-acyl-homoserine lactones (AHLs), beta-lactam antibiotics and shows prephenate dehydratase activity. Acts as an acylase on AHL and hydrolyzes the amide bond of the acyl side-chain of AHL molecules, releasing homoserine lactone (HSL) and the fatty acid. Can use different 3-oxo-acyl homoserine lactones, such as 3-oxo-decanoyl homoserine lactone, which is the preferred substrate, 3-oxo-octanoyl homoserine lactone, 3-oxo-hexanoyl homoserine lactone and 3-oxo-dodecanoyl homoserine lactone. It can also degrade various beta-lactam antibiotics, including penicillin G, amoxicillin and ampicillin, but not cefotaxime. In addition, it can complement a phenylalanine auxotrophic E.coli mutant, which carries a kanamycin gene inserted into pheA, suggesting that GqqA can also function as a prephenate dehydratase. Involved in bacterial quorum quenching (QQ) and cellulose biofilm formation. The polypeptide is Bifunctional N-acyl-homoserine lactone acylase/prephenate dehydratase (Komagataeibacter europaeus (Gluconacetobacter europaeus)).